The chain runs to 286 residues: 4-diphosphocytidyl-2-C-methyl-D-erythritol kinase (286 aa).

Lysine 11 is an active-site residue. 93 to 103 (PFGAGLGGGSS) serves as a coordination point for ATP. Aspartate 135 is an active-site residue.

It belongs to the GHMP kinase family. IspE subfamily.

The enzyme catalyses 4-CDP-2-C-methyl-D-erythritol + ATP = 4-CDP-2-C-methyl-D-erythritol 2-phosphate + ADP + H(+). It participates in isoprenoid biosynthesis; isopentenyl diphosphate biosynthesis via DXP pathway; isopentenyl diphosphate from 1-deoxy-D-xylulose 5-phosphate: step 3/6. Functionally, catalyzes the phosphorylation of the position 2 hydroxy group of 4-diphosphocytidyl-2C-methyl-D-erythritol. The protein is 4-diphosphocytidyl-2-C-methyl-D-erythritol kinase of Chlorobaculum parvum (strain DSM 263 / NCIMB 8327) (Chlorobium vibrioforme subsp. thiosulfatophilum).